We begin with the raw amino-acid sequence, 239 residues long: Tetraspanin-9 (239 aa).

The Cytoplasmic portion of the chain corresponds to 1-13 (MARGCLCCVKYMM). A helical membrane pass occupies residues 14–34 (FLFNLLFWLSGCGLLGVGIWL). Topologically, residues 35-55 (SVSQGSFATFSPSFPSLSAAN) are extracellular. A helical transmembrane segment spans residues 56–76 (LVITLGSVVMVTGFLGCLGAI). Residues 77–85 (KENKCLLLS) are Cytoplasmic-facing. Residues 86 to 106 (FFIVLLIILLAELILLILFFV) traverse the membrane as a helical segment. Over 107–203 (YTEKVSENAK…VEEWLNDNKH (97 aa)) the chain is Extracellular. N-linked (GlcNAc...) asparagine glycosylation is present at asparagine 180. Residues 204–224 (LLGTIAMCVLVLQLLGMAFSM) traverse the membrane as a helical segment. At 225 to 239 (TLYQQIHRAGKKYDA) the chain is on the cytoplasmic side.

It belongs to the tetraspanin (TM4SF) family.

Its subcellular location is the membrane. In Danio rerio (Zebrafish), this protein is Tetraspanin-9 (tspan9).